The chain runs to 138 residues: Large ribosomal subunit protein uL16 (138 aa).

The span at Met1–Gln13 shows a compositional bias: basic residues. Residues Met1 to Gly24 are disordered.

It belongs to the universal ribosomal protein uL16 family. As to quaternary structure, part of the 50S ribosomal subunit.

Binds 23S rRNA and is also seen to make contacts with the A and possibly P site tRNAs. This chain is Large ribosomal subunit protein uL16, found in Burkholderia ambifaria (strain ATCC BAA-244 / DSM 16087 / CCUG 44356 / LMG 19182 / AMMD) (Burkholderia cepacia (strain AMMD)).